The sequence spans 472 residues: Eukaryotic translation initiation factor 2 subunit 3 (472 aa).

The 209-residue stretch at 39 to 247 (QATINIGTIG…YIVNKIPVPV (209 aa)) folds into the tr-type G domain. Residues 48–55 (GHVAHGKS) form a G1 region. 51-56 (AHGKST) lines the GTP pocket. Positions 76–80 (NITIK) are G2. A G3 region spans residues 134-137 (DCPG). Residues 190–193 (NKID) and 225–227 (SAQ) each bind GTP. A G4 region spans residues 190-193 (NKID). The segment at 225–227 (SAQ) is G5. The interval 457-469 (GQIRRGVTITPTV) is interacts with cdc123.

Belongs to the TRAFAC class translation factor GTPase superfamily. Classic translation factor GTPase family. EIF2G subfamily. As to quaternary structure, eukaryotic translation initiation factor 2 eIF2 is a heterotrimeric complex composed of an alpha (EIF2S1), a beta (EIF2S2) and a gamma (EIF2S3) chain. eIF2 is member of the 43S pre-initiation complex (43S PIC).

It is found in the cytoplasm. It localises to the cytosol. The catalysed reaction is GTP + H2O = GDP + phosphate + H(+). In terms of biological role, member of the eIF2 complex that functions in the early steps of protein synthesis by forming a ternary complex with GTP and initiator tRNA. This complex binds to a 40S ribosomal subunit, followed by mRNA binding to form the 43S pre-initiation complex (43S PIC). Junction of the 60S ribosomal subunit to form the 80S initiation complex is preceded by hydrolysis of the GTP bound to eIF2 and release of an eIF2-GDP binary complex. In order for eIF2 to recycle and catalyze another round of initiation, the GDP bound to eIF2 must exchange with GTP by way of a reaction catalyzed by eIF-2B. The protein is Eukaryotic translation initiation factor 2 subunit 3 of Danio rerio (Zebrafish).